The sequence spans 504 residues: Sodium-coupled neutral amino acid transporter 3 (504 aa).

N-linked (GlcNAc...) asparagine glycosylation occurs at Asn-74. 5 consecutive transmembrane segments (helical) span residues 83–103, 106–126, 144–164, 187–207, and 213–233; these read GILGLAYAMANTGIILFLFLL, VALLSSYSIHLLLKSSGVVGI, AAALAITLQNIGAMSSYLYII, MNGNYLVILVSVTIILPLALM, and LGYSSGFSLSCMVFFLIAVIY. Cys-240 and Cys-275 form a disulfide bridge. N-linked (GlcNAc...) asparagine glycosylation is found at Asn-247, Asn-248, Asn-252, and Asn-323. The next 5 helical transmembrane spans lie at 324-344, 366-386, 408-428, 431-451, and 471-491; these read LSIAVMYIMYFLAALFGYLTF, ILCVRVAVLTAVTLTVPIVLF, VLIAVGLLTCINLLVIFAPNI, IFGVIGATSAPFLIFIFPAIF, and ALCFAMLGFLLMTMSLSFIII.

Belongs to the amino acid/polyamine transporter 2 family.

It localises to the cell membrane. It is found in the basolateral cell membrane. It carries out the reaction L-glutamine(out) + Na(+)(out) + H(+)(in) = L-glutamine(in) + Na(+)(in) + H(+)(out). It catalyses the reaction L-asparagine(out) + Na(+)(out) + H(+)(in) = L-asparagine(in) + Na(+)(in) + H(+)(out). The enzyme catalyses L-histidine(out) + Na(+)(out) + H(+)(in) = L-histidine(in) + Na(+)(in) + H(+)(out). Symporter that cotransports specific neutral amino acids and sodium ions, coupled to an H(+) antiporter activity. Mainly participates in the glutamate-GABA-glutamine cycle in brain where it transports L-glutamine from astrocytes in the intercellular space for the replenishment of both neurotransmitters glutamate and gamma-aminobutyric acid (GABA) in neurons and also functions as the major influx transporter in ganglion cells mediating the uptake of glutamine. The transport activity is specific for L-glutamine, L-histidine and L-asparagine. The transport is electroneutral coupled to the cotransport of 1 Na(+) and the antiport of 1 H(+). The transport is pH dependent, saturable, Li(+) tolerant and functions in both direction depending on the concentration gradients of its substrates and cotransported ions. Also mediates an amino acid-gated H(+) conductance that is not stoichiometrically coupled to the amino acid transport but which influences the ionic gradients that drive the amino acid transport. In addition, may play a role in nitrogen metabolism, amino acid homeostasis, glucose metabolism and renal ammoniagenesis. This chain is Sodium-coupled neutral amino acid transporter 3, found in Homo sapiens (Human).